Reading from the N-terminus, the 373-residue chain is Erythronate-4-phosphate dehydrogenase (373 aa).

Ser-45 and Thr-67 together coordinate substrate. NAD(+)-binding positions include Asp-147, 207–209 (ASR), and Asp-233. Residue Arg-209 is part of the active site. Glu-238 is an active-site residue. His-255 (proton donor) is an active-site residue. Gly-258 contacts NAD(+).

Belongs to the D-isomer specific 2-hydroxyacid dehydrogenase family. PdxB subfamily. As to quaternary structure, homodimer.

It is found in the cytoplasm. The enzyme catalyses 4-phospho-D-erythronate + NAD(+) = (R)-3-hydroxy-2-oxo-4-phosphooxybutanoate + NADH + H(+). Its pathway is cofactor biosynthesis; pyridoxine 5'-phosphate biosynthesis; pyridoxine 5'-phosphate from D-erythrose 4-phosphate: step 2/5. Functionally, catalyzes the oxidation of erythronate-4-phosphate to 3-hydroxy-2-oxo-4-phosphonooxybutanoate. The chain is Erythronate-4-phosphate dehydrogenase from Pseudoalteromonas translucida (strain TAC 125).